The following is a 178-amino-acid chain: Large ribosomal subunit protein bL17 (178 aa).

The segment at 150 to 178 is disordered; the sequence is PADEPVVAEENAPQSAVKDAVDECEGKAD. A compositionally biased stretch (basic and acidic residues) spans 168 to 178; sequence DAVDECEGKAD.

It belongs to the bacterial ribosomal protein bL17 family. As to quaternary structure, part of the 50S ribosomal subunit. Contacts protein L32.

The protein is Large ribosomal subunit protein bL17 of Geobacter metallireducens (strain ATCC 53774 / DSM 7210 / GS-15).